A 56-amino-acid polypeptide reads, in one-letter code: Ovomucoid (56 aa).

The Kazal-like domain occupies 6–56; that stretch reads VDCSEYPKPACTLEYRPLCGSDNKTYGNKCNFCNAVVESNGTLTLSHFGKC. 3 disulfides stabilise this stretch: Cys8-Cys38, Cys16-Cys35, and Cys24-Cys56. A glycan (N-linked (GlcNAc...) asparagine) is linked at Asn45.

It localises to the secreted. The polypeptide is Ovomucoid (Meleagris ocellata (Ocellated turkey)).